The sequence spans 541 residues: Copper transport protein CutJ (541 aa).

A signal peptide spans methionine 1–alanine 25. Residues histidine 24 and histidine 110 each contribute to the Cu cation site. 8 helical membrane-spanning segments follow: residues alanine 146–tyrosine 166, isoleucine 180–threonine 200, serine 228–isoleucine 248, proline 262–valine 282, phenylalanine 293–leucine 313, tryptophan 335–isoleucine 355, leucine 370–leucine 390, and tryptophan 407–proline 427.

It in the N-terminal section; belongs to the CopC family. This sequence in the C-terminal section; belongs to the CopD family.

It is found in the cell membrane. Functionally, involved in uptake of extracellular oxidized copper under copper-limiting conditions. The chain is Copper transport protein CutJ from Bacillus subtilis (strain 168).